The following is a 556-amino-acid chain: 2-succinyl-5-enolpyruvyl-6-hydroxy-3-cyclohexene-1-carboxylate synthase (556 aa).

It belongs to the TPP enzyme family. MenD subfamily. Homodimer. It depends on Mg(2+) as a cofactor. Requires Mn(2+) as cofactor. Thiamine diphosphate serves as cofactor.

The enzyme catalyses isochorismate + 2-oxoglutarate + H(+) = 5-enolpyruvoyl-6-hydroxy-2-succinyl-cyclohex-3-ene-1-carboxylate + CO2. It functions in the pathway quinol/quinone metabolism; 1,4-dihydroxy-2-naphthoate biosynthesis; 1,4-dihydroxy-2-naphthoate from chorismate: step 2/7. It participates in quinol/quinone metabolism; menaquinone biosynthesis. Catalyzes the thiamine diphosphate-dependent decarboxylation of 2-oxoglutarate and the subsequent addition of the resulting succinic semialdehyde-thiamine pyrophosphate anion to isochorismate to yield 2-succinyl-5-enolpyruvyl-6-hydroxy-3-cyclohexene-1-carboxylate (SEPHCHC). This chain is 2-succinyl-5-enolpyruvyl-6-hydroxy-3-cyclohexene-1-carboxylate synthase, found in Escherichia coli O7:K1 (strain IAI39 / ExPEC).